The sequence spans 222 residues: Peptide methionine sulfoxide reductase MsrA 2 (222 aa).

Residue Cys56 is part of the active site.

It belongs to the MsrA Met sulfoxide reductase family.

The enzyme catalyses L-methionyl-[protein] + [thioredoxin]-disulfide + H2O = L-methionyl-(S)-S-oxide-[protein] + [thioredoxin]-dithiol. It carries out the reaction [thioredoxin]-disulfide + L-methionine + H2O = L-methionine (S)-S-oxide + [thioredoxin]-dithiol. Its function is as follows. Has an important function as a repair enzyme for proteins that have been inactivated by oxidation. Catalyzes the reversible oxidation-reduction of methionine sulfoxide in proteins to methionine. In Nostoc sp. (strain PCC 7120 / SAG 25.82 / UTEX 2576), this protein is Peptide methionine sulfoxide reductase MsrA 2 (msrA2).